Reading from the N-terminus, the 932-residue chain is Isoleucine--tRNA ligase (932 aa).

A 'HIGH' region motif is present at residues 57-67; it reads PYANGDIHIGT. Glu-559 is a binding site for L-isoleucyl-5'-AMP. The short motif at 600 to 604 is the 'KMSKS' region element; that stretch reads KMSKS. Position 603 (Lys-603) interacts with ATP. Zn(2+) contacts are provided by Cys-899, Cys-902, Cys-919, and Cys-922.

The protein belongs to the class-I aminoacyl-tRNA synthetase family. IleS type 1 subfamily. As to quaternary structure, monomer. The cofactor is Zn(2+).

It localises to the cytoplasm. The catalysed reaction is tRNA(Ile) + L-isoleucine + ATP = L-isoleucyl-tRNA(Ile) + AMP + diphosphate. In terms of biological role, catalyzes the attachment of isoleucine to tRNA(Ile). As IleRS can inadvertently accommodate and process structurally similar amino acids such as valine, to avoid such errors it has two additional distinct tRNA(Ile)-dependent editing activities. One activity is designated as 'pretransfer' editing and involves the hydrolysis of activated Val-AMP. The other activity is designated 'posttransfer' editing and involves deacylation of mischarged Val-tRNA(Ile). In Caldanaerobacter subterraneus subsp. tengcongensis (strain DSM 15242 / JCM 11007 / NBRC 100824 / MB4) (Thermoanaerobacter tengcongensis), this protein is Isoleucine--tRNA ligase.